The primary structure comprises 320 residues: Beta-carotene 3-hydroxylase, chloroplastic (320 aa).

The transit peptide at 1-78 (METQFLVSGR…EKELRGKLVV (78 aa)) directs the protein to the chloroplast. A run of 2 helical transmembrane segments spans residues 118–138 (YLVAAVMSSFGITSMAVLSVY) and 152–172 (LSEMFGTFALSVGAAVGMEFW). The Fatty acid hydroxylase domain maps to 165-292 (AAVGMEFWAR…KFNGVPYGLF (128 aa)). Positions 177–182 (HEALWH) match the Histidine box-1 motif. The Histidine box-2 motif lies at 189–193 (HESHH). A run of 2 helical transmembrane segments spans residues 204-224 (DIFAIINAVPAIALLSYGFFH) and 228-248 (IPGLCFGAGLGITVFGMAYMF). Residues 250–255 (HDGLVH) carry the Histidine box-3 motif. Positions 276–280 (HTLHH) match the Histidine box-4 motif.

Belongs to the sterol desaturase family.

It is found in the plastid. The protein resides in the chloroplast membrane. It catalyses the reaction all-trans-beta-carotene + 4 reduced [2Fe-2S]-[ferredoxin] + 2 O2 + 4 H(+) = all-trans-zeaxanthin + 4 oxidized [2Fe-2S]-[ferredoxin] + 2 H2O. Its function is as follows. Nonheme diiron monooxygenase involved in the biosynthesis of xanthophylls. Specific for beta-ring hydroxylations of beta-carotene. Uses ferredoxin as an electron donor. In Gentiana lutea (Yellow gentian), this protein is Beta-carotene 3-hydroxylase, chloroplastic (BHY).